The following is a 643-amino-acid chain: Ecto-NOX disulfide-thiol exchanger 1 (643 aa).

In terms of domain architecture, RRM spans lysine 142 to alanine 221. Coiled-coil stretches lie at residues valine 307 to isoleucine 342 and glutamine 425 to leucine 570.

The protein belongs to the ENOX family. Requires Cu cation as cofactor. In terms of tissue distribution, expressed in lymphocyte cells, breast and breast cancer (at protein level). Found in the sera of cancer patients with a wide variety of cancers including breast, prostate, lung and ovarian cancers, leukemias, and lymphomas. Found also in the serum of healthy volunteers or patients with disorders other than cancer. Probably shed into serum by cancer cells.

The protein resides in the cell membrane. The protein localises to the secreted. Its subcellular location is the extracellular space. With respect to regulation, not inhibited by the antitumor sulfonylurea LY181984, the vabilloid capsaicin, and retinoids. In terms of biological role, probably acts as a terminal oxidase of plasma electron transport from cytosolic NAD(P)H via hydroquinones to acceptors at the cell surface. Hydroquinone oxidase activity alternates with a protein disulfide-thiol interchange/oxidoreductase activity which may control physical membrane displacements associated with vesicle budding or cell enlargement. The activities oscillate with a period length of 24 minutes and play a role in control of the ultradian cellular biological clock. The sequence is that of Ecto-NOX disulfide-thiol exchanger 1 (ENOX1) from Homo sapiens (Human).